A 251-amino-acid polypeptide reads, in one-letter code: MAEQKKYLLFLATPDSEFAKKTYGGYHNVFVSLLGDEGEQWDSFRVVDGEFPEEKDLEKYEGFVISGSSHDAFQDTDWILKLCDIIKKLDDMNKKVLGICFGHQLIARAKGGKVARARKGPELCLGNITIVKEAVMPENYFGEEVPANLRIIKCHQDEVLELPENAKLLAYSSMYEVEMYSIKDNFLCIQGHPEYNRDILFDIIDRVLAGGHIKQNFAETSKATMEKNEADRKFWQKICKNFLKRQPSLLV.

In terms of domain architecture, Glutamine amidotransferase type-1 spans Ser-16–Ile-213. Cys-100 functions as the Nucleophile in the catalytic mechanism. Residues His-192 and Glu-194 contribute to the active site.

Belongs to the peptidase C26 family.

The protein resides in the cytoplasm. It localises to the cytosol. The protein operates within secondary metabolite biosynthesis. Its function is as follows. Involved in glucosinolate biosynthesis. Hydrolyzes the gamma-glutamyl peptide bond of several glutathione (GSH) conjugates to produce Cys-Gly conjugates related to glucosinolates. The gamma-Glu-Cys-Gly-GSH conjugates are the sulfur-donating molecule in glucosinolate biosynthesis. In Arabidopsis thaliana (Mouse-ear cress), this protein is Gamma-glutamyl peptidase 4.